The chain runs to 304 residues: Homoserine O-acetyltransferase (304 aa).

Catalysis depends on C142, which acts as the Acyl-thioester intermediate. The substrate site is built by K163 and S192. H235 acts as the Proton acceptor in catalysis. The active site involves E237. R249 serves as a coordination point for substrate.

Belongs to the MetA family.

The protein localises to the cytoplasm. The enzyme catalyses L-homoserine + acetyl-CoA = O-acetyl-L-homoserine + CoA. The protein operates within amino-acid biosynthesis; L-methionine biosynthesis via de novo pathway; O-acetyl-L-homoserine from L-homoserine: step 1/1. Transfers an acetyl group from acetyl-CoA to L-homoserine, forming acetyl-L-homoserine. This Clostridium beijerinckii (strain ATCC 51743 / NCIMB 8052) (Clostridium acetobutylicum) protein is Homoserine O-acetyltransferase.